The sequence spans 776 residues: Glutathione biosynthesis bifunctional protein GshAB (776 aa).

The glutamate--cysteine ligase stretch occupies residues 1–354; sequence MIKLDMTILD…QLADENENNI (354 aa). In terms of domain architecture, ATP-grasp spans 521-775; the sequence is KLVLAENNIR…IGDKILDFLF (255 aa). Residue 548–606 participates in ATP binding; that stretch reads SLFKDKQIVVKPKSTNYGWGISIFKNKFTTEDYQEALNIAFSYDSSVIIEEFIPGDEFR. The Mg(2+) site is built by Asp728, Glu745, and Asn747. The Mn(2+) site is built by Asp728, Glu745, and Asn747.

The protein in the N-terminal section; belongs to the glutamate--cysteine ligase type 1 family. Type 2 subfamily. Monomer. The cofactor is Mg(2+). Mn(2+) is required as a cofactor.

It catalyses the reaction L-cysteine + L-glutamate + ATP = gamma-L-glutamyl-L-cysteine + ADP + phosphate + H(+). The catalysed reaction is gamma-L-glutamyl-L-cysteine + glycine + ATP = glutathione + ADP + phosphate + H(+). It functions in the pathway sulfur metabolism; glutathione biosynthesis; glutathione from L-cysteine and L-glutamate: step 1/2. It participates in sulfur metabolism; glutathione biosynthesis; glutathione from L-cysteine and L-glutamate: step 2/2. Its function is as follows. Synthesizes glutathione from L-glutamate and L-cysteine via gamma-L-glutamyl-L-cysteine. The sequence is that of Glutathione biosynthesis bifunctional protein GshAB from Listeria welshimeri serovar 6b (strain ATCC 35897 / DSM 20650 / CCUG 15529 / CIP 8149 / NCTC 11857 / SLCC 5334 / V8).